A 926-amino-acid chain; its full sequence is Taz1-interacting factor 1 (926 aa).

Coiled-coil stretches lie at residues 461–496 (REAV…SHQN) and 548–671 (SFTD…LKQK). Position 548 is a phosphoserine (Ser548). Phosphothreonine is present on Thr550. A Phosphoserine modification is found at Ser552.

The protein belongs to the ATG11 family. In terms of assembly, homodimer and potential homooligomers. Interacts with taz1.

Its subcellular location is the preautophagosomal structure membrane. It localises to the vacuole membrane. In terms of biological role, involved in cytoplasm to vacuole transport (Cvt), pexophagy, mitophagy and nucleophagy. Recruits mitochondria for their selective degradation via autophagy (mitophagy) during starvation. Works as scaffold proteins that recruit ATG proteins to the preautophagosome (PAS), the site of vesicle/autophagosome formation. Required for atg9 anterograde transport from the mitochondria to the PAS. Required for nitrogen starvation-induced sexual development and for entering the dormant G0 state. The sequence is that of Taz1-interacting factor 1 (taf1) from Schizosaccharomyces pombe (strain 972 / ATCC 24843) (Fission yeast).